A 319-amino-acid chain; its full sequence is MASPAAGDVLIVGSGLVGRSWAMLFASGGFRVKLYDIEPRQITGALENIRKEMKSLQQSGSLKGSLSAEEQLSLISSCTNLAEAVEGVVHIQECVPENLDLKRKIFAQLDSIVDDRVVLSSSSSCLLPSKLFTGLAHVKQCIVAHPVNPPYYIPLVELVPHPETSPATVDRTHALMRKIGQSPVRVLKEIDGFVLNRLQYAIISEAWRLVEEGIVSPSDLDLVMSDGLGMRYAFIGPLETMHLNAEGMLSYCDRYSEGMKRVLKSFGSIPEFSGATVEKVNQAMCKKVPADPEHLAARREWRDECLKRLAKLKRQMQPQ.

Alanine 2 is modified (N-acetylalanine). At serine 3 the chain carries Phosphoserine. NAD(+)-binding positions include 16-17 (LV), aspartate 36, glutamate 97, and lysine 102. A Phosphoserine modification is found at serine 111.

The protein belongs to the 3-hydroxyacyl-CoA dehydrogenase family. Homodimer. As to expression, detected in eye lens, kidney, liver, heart, lung, brain and testis.

Its subcellular location is the cytoplasm. It catalyses the reaction L-gulonate + NAD(+) = 3-dehydro-L-gulonate + NADH + H(+). Inhibited by malonate and by inorganic phosphate. Functionally, functions as a crystallin in the rabbit eye lens. Has high L-gulonate 3-dehydrogenase activity. It also exhibits low dehydrogenase activity toward L-3-hydroxybutyrate (HBA) and L-threonate. The polypeptide is Lambda-crystallin (CRYL1) (Oryctolagus cuniculus (Rabbit)).